The following is a 111-amino-acid chain: Somatostatin-1B (111 aa).

The signal sequence occupies residues 1-19; the sequence is MQLLSSLVSLLLVLYSVRA. The propeptide occupies 20–87; that stretch reads AAVLPVEERN…RLEERAVYNR (68 aa). The cysteines at positions 100 and 111 are disulfide-linked.

Belongs to the somatostatin family.

The protein localises to the secreted. In terms of biological role, somatostatin inhibits the release of somatotropin. The sequence is that of Somatostatin-1B (sst1b) from Carassius auratus (Goldfish).